The sequence spans 85 residues: Protein Vpu (85 aa).

Residues 1–7 (MHQENLL) lie on the Extracellular side of the membrane. Residues 8–28 (ALIALSALCLINVLIWLFNLR) form a helical membrane-spanning segment. Residues 29–85 (IYLVQRKQDRREQEILERLRRIKEIRDDSDYESNEEEQQEVMELIHSHGFANPMFEL) lie on the Cytoplasmic side of the membrane.

The protein belongs to the HIV-1 VPU protein family. In terms of assembly, homopentamer. Interacts with host CD4 and BRTC; these interactions induce proteasomal degradation of CD4. Interacts with host BST2; this interaction leads to the degradation of host BST2. Interacts with host FBXW11. Interacts with host AP1M1; this interaction plays a role in the mistrafficking and subsequent degradation of host BST2. Interacts with host RANBP2; this interaction allows Vpu to down-regulate host BLM sumoylation. Post-translationally, phosphorylated by host CK2. This phosphorylation is necessary for interaction with human BTRC and degradation of CD4.

It is found in the host membrane. Ion channel activity is inhibited by hexamethylene amiloride in vitro. Enhances virion budding by targeting host CD4 and Tetherin/BST2 to proteasome degradation. Degradation of CD4 prevents any unwanted premature interactions between viral Env and its host receptor CD4 in the endoplasmic reticulum. Degradation of antiretroviral protein Tetherin/BST2 is important for virion budding, as BST2 tethers new viral particles to the host cell membrane. Mechanistically, Vpu bridges either CD4 or BST2 to BTRC, a substrate recognition subunit of the Skp1/Cullin/F-box protein E3 ubiquitin ligase, induces their ubiquitination and subsequent proteasomal degradation. The alteration of the E3 ligase specificity by Vpu seems to promote the degradation of host IKBKB, leading to NF-kappa-B down-regulation and subsequent apoptosis. Acts as a viroporin that forms an oligomeric ion channel in membranes. Modulates the host DNA repair mechanisms to promote degradation of nuclear viral cDNA in cells that are already productively infected in order to suppress immune sensing and proviral hyper-integration (superinfection). Manipulates PML-NBs and modulates SUMOylation of host BLM protein thereby enhancing its DNA-end processing activity toward viral unintegrated linear DNA. Also inhibits RAD52-mediated homologous repair of viral cDNA, preventing the generation of dead-end circular forms of single copies of the long terminal repeat and permitting sustained nucleolytic attack. The sequence is that of Protein Vpu from Human immunodeficiency virus type 1 group O (isolate MVP5180) (HIV-1).